The sequence spans 57 residues: MAFDKKLLDIVACPVCKGKLEYNKQDNQLICKFDKIAYPINDGIPVLLENKAEPLAE.

This sequence belongs to the UPF0434 family.

The chain is UPF0434 protein swp_2279 from Shewanella piezotolerans (strain WP3 / JCM 13877).